We begin with the raw amino-acid sequence, 392 residues long: MLLRWLARPAERCLGRGGGGGGGGGGDGLLWHAELKPHASGEYSIAVAQANAELEDQGQVVTSPAATFVGVYDGHGGPEASRFISSRLFPHLHRFASEQGGMSTDAIKRAFHATEEEFLHMVKRSWLKQPQIASVGSCCLVGAITDNVLYVANLGDSRAVLGRRGPDGREVVAERLSNDHNVAEEEVRKELTEQHPDDSRIVIYTRGVWRIKGIIQVSRSIGDVYLKKPEFARDPIFRQYVCSIPLKRPVMTAEPSIKEHQLRQQDLFLIFASDGLWEQLTDKAAVDIVFKNPRAGIAKRLVRAALTEAARKREMRYTDIKHIERGSRRNFHDDITVVVVYLDHHKHGVRPNLGNRNSFRFTNAPVDIFSGSSEEVDHHPLRLNLAMDGAVG.

The region spanning 39–342 (ASGEYSIAVA…DDITVVVVYL (304 aa)) is the PPM-type phosphatase domain. Mn(2+) is bound by residues Asp73, Gly74, Asp274, and Asp333.

Belongs to the PP2C family. The cofactor is Mg(2+). Mn(2+) is required as a cofactor.

It carries out the reaction O-phospho-L-seryl-[protein] + H2O = L-seryl-[protein] + phosphate. It catalyses the reaction O-phospho-L-threonyl-[protein] + H2O = L-threonyl-[protein] + phosphate. The protein is Probable protein phosphatase 2C 78 of Oryza sativa subsp. japonica (Rice).